The chain runs to 444 residues: D(2) dopamine receptor (444 aa).

The Extracellular segment spans residues 1-37; it reads MDPLNLSWYDDDLERQNWSRPFNGSEGKADRPHYNYY. N-linked (GlcNAc...) asparagine glycosylation is found at asparagine 5, asparagine 17, and asparagine 23. Residues 38–60 form a helical membrane-spanning segment; it reads AMLLTLLIFIIVFGNVLVCMAVS. Residues 61–70 lie on the Cytoplasmic side of the membrane; it reads REKALQTTTN. Residues 71-93 traverse the membrane as a helical segment; it reads YLIVSLAVADLLVATLVMPWVVY. At 94-108 the chain is on the extracellular side; the sequence is LEVVGEWKFSRIHCD. Cysteine 107 and cysteine 182 are oxidised to a cystine. The chain crosses the membrane as a helical span at residues 109–130; it reads IFVTLDVMMCTASILNLCAISI. Over 131–151 the chain is Cytoplasmic; that stretch reads DRYTAVAMPMLYNTRYSSKRR. The helical transmembrane segment at 152 to 172 threads the bilayer; that stretch reads VTVMIAIVWVLSFTISCPLLF. Residues 173–188 lie on the Extracellular side of the membrane; that stretch reads GLNNTDQNECIIANPA. Residues 189 to 213 form a helical membrane-spanning segment; sequence FVVYSSIVSFYVPFIVTLLVYIKIY. Residues 211–374 form an interaction with PPP1R9B region; that stretch reads KIYIVLRKRR…SQQKEKKATQ (164 aa). The Cytoplasmic portion of the chain corresponds to 214–374; that stretch reads IVLRKRRKRV…SQQKEKKATQ (161 aa). Residues 282–329 are disordered; sequence EMLSSTSPPERTRYSPIPPSHHQLTLPDPSHHGLHSNPDSPAKPEKNG. Residues 375 to 396 form a helical membrane-spanning segment; the sequence is MLAIVLGVFIICWLPFFITHIL. The Extracellular portion of the chain corresponds to 397 to 410; the sequence is NIHCDCNIPPVLYS. A disulfide bridge connects residues cysteine 400 and cysteine 402. A helical transmembrane segment spans residues 411 to 432; the sequence is AFTWLGYVNSAVNPIIYTTFNI. The Cytoplasmic portion of the chain corresponds to 433 to 444; sequence EFRKAFMKILHC. A lipid anchor (S-palmitoyl cysteine) is attached at cysteine 444.

The protein belongs to the G-protein coupled receptor 1 family. In terms of assembly, forms homo- and heterooligomers with DRD4. The interaction with DRD4 may modulate agonist-induced downstream signaling. Interacts with CADPS and CADPS2. Interacts with GPRASP1, PPP1R9B and CLIC6. Interacts with ARRB2. Interacts with HTR2A. Interacts with DRD1. Interacts with KCNA2. Post-translationally, palmitoylated. Palmitoylation which is required for proper localization to the plasma membrane and stability of the receptor could be carried on by ZDHHC4, ZDHHC3 and ZDHHC8. In terms of tissue distribution, expressed in the anterior lobe of the pituitary gland. Expressed ventral tegmental area of the midbrain and the pars compacta of the substantia nigra. Expressed seven times more than isoform short in the caudate nucleus. As to expression, expressed in the anterior lobe of the pituitary gland. Expressed in the caudate nucleus. Not expressed in the wider brain.

Its subcellular location is the cell membrane. The protein localises to the golgi apparatus membrane. In terms of biological role, dopamine receptor whose activity is mediated by G proteins which inhibit adenylyl cyclase. Positively regulates postnatal regression of retinal hyaloid vessels via suppression of VEGFR2/KDR activity, downstream of OPN5. The chain is D(2) dopamine receptor (Drd2) from Rattus norvegicus (Rat).